Here is a 127-residue protein sequence, read N- to C-terminus: MARVKRAVNAHKKRRAILEQASGYRGQRSRLYRKAKEQVTHSLVYNYNDRKKRKGDFRQLWIQRINAAARANGITYNRFIQGLKAANVEVDRKILAELAVNDPNAFAALVEVAQKALPSDVNAPKAA.

This sequence belongs to the bacterial ribosomal protein bL20 family.

Its function is as follows. Binds directly to 23S ribosomal RNA and is necessary for the in vitro assembly process of the 50S ribosomal subunit. It is not involved in the protein synthesizing functions of that subunit. The polypeptide is Large ribosomal subunit protein bL20 (rplT) (Streptomyces coelicolor (strain ATCC BAA-471 / A3(2) / M145)).